Reading from the N-terminus, the 423-residue chain is Glycine amidinotransferase, mitochondrial (423 aa).

The N-terminal 43 residues, 1 to 43 (MLRVRCLRGGSRGAEAVHYIGSRLGRTLTGWVQRTFQSTQAAT), are a transit peptide targeting the mitochondrion. The disordered stretch occupies residues 43-63 (TASSRNSFAADDKATEPLPKD). Phosphoserine is present on residues Ser-46 and Ser-49. Basic and acidic residues predominate over residues 52-61 (ADDKATEPLP). An arginine-binding site is contributed by Asp-170. Catalysis depends on residues Asp-254 and His-303. Residues Asp-305, Arg-322, Ser-354, and Ser-355 each contribute to the arginine site. Residue Lys-385 is modified to N6-acetyllysine. Residue Cys-407 is the Amidino-cysteine intermediate of the active site.

Belongs to the amidinotransferase family. In terms of assembly, homodimer.

Its subcellular location is the mitochondrion inner membrane. It carries out the reaction L-arginine + glycine = guanidinoacetate + L-ornithine. The catalysed reaction is 4-aminobutanoate + L-arginine = 4-guanidinobutanoate + L-ornithine. It catalyses the reaction beta-alanine + L-arginine = 3-guanidinopropanoate + L-ornithine. The enzyme catalyses taurine + L-arginine = taurocyamine + L-ornithine. It participates in amine and polyamine biosynthesis; creatine biosynthesis; creatine from L-arginine and glycine: step 1/2. In terms of biological role, transamidinase that catalyzes the transfer of the amidino group of L-arginine onto the amino moiety of acceptor metabolites such as glycine, beta-alanine, gamma-aminobutyric acid (GABA) and taurine yielding the corresponding guanidine derivatives. Catalyzes the rate-limiting step of creatine biosynthesis, namely the transfer of the amidino group from L-arginine to glycine to generate guanidinoacetate, which is then methylated by GAMT to form creatine. Provides creatine as a source for ATP generation in tissues with high energy demands, in particular skeletal muscle, heart and brain. In Macaca fascicularis (Crab-eating macaque), this protein is Glycine amidinotransferase, mitochondrial (GATM).